The chain runs to 792 residues: Ubiquitin carboxyl-terminal hydrolase 10 (792 aa).

Residues Thr-2–Ser-27 form a DHR2-binding module region. Disordered regions lie at residues Ala-64 to Pro-87 and Lys-103 to Pro-320. Low complexity predominate over residues Asp-107–Ser-129. The tract at residues Thr-109–Ile-145 is SIR4-binding module. Residues Glu-144 to Gly-171 are compositionally biased toward basic and acidic residues. A UTP22-binding module region spans residues Asp-167–Ser-208. A compositionally biased stretch (acidic residues) spans Glu-172–Gly-195. Over residues Glu-211–Leu-220 the composition is skewed to basic and acidic residues. Over residues Ser-226–Tyr-241 the composition is skewed to acidic residues. The segment covering Val-288–Arg-297 has biased composition (polar residues). In terms of domain architecture, USP spans Arg-362–Leu-733. The active-site Nucleophile is the Cys-371. The interval Leu-526–Val-563 is disordered. Polar residues predominate over residues Ser-530–Gly-539. The segment covering Thr-540–Val-563 has biased composition (low complexity). The Proton acceptor role is filled by His-691. Over residues Thr-749–Asn-766 the composition is skewed to polar residues. Positions Thr-749–Lys-792 are disordered. Basic residues predominate over residues Asn-773–Lys-792.

This sequence belongs to the peptidase C19 family. Interacts with SIR4. Interacts with the proliferating-cell nuclear antigen PCNA/POL30. Interacts with DHR2 and UTP22.

The protein localises to the nucleus. The protein resides in the chromosome. It is found in the telomere. Its subcellular location is the nucleolus. It carries out the reaction Thiol-dependent hydrolysis of ester, thioester, amide, peptide and isopeptide bonds formed by the C-terminal Gly of ubiquitin (a 76-residue protein attached to proteins as an intracellular targeting signal).. Functionally, deubiquitinating enzyme involved in telomere and HM loci silencing, which is the repression of chromatin structure which leads to a stop in the transcription of nearby genes. Targets histone H2B for deubiquitination, thus helping to localize SIR2 to the telomere. At silent chromatin, including telomeres and the rDNA locus, not only maintains low H2B 'Lys-123' ubiquitination (H2BK123Ub), but also low H3 'Lys-4' and 'Lys-79' methylation (H3K4me and H3K79me, respectively). Controls the proliferating-cell nuclear antigen PCNA/POL30 deubiquitination which is crucial for keeping TLS polymerases in check as well as for down-regulating the error-free bypass. Deubiquitinates and stabilizes RPA190, the largest subunit of RNA polymerase I, to achieve optimal levels of ribosomes and cell growth. Also protects nutrient transporters such as GAP1 from ubiquitin-dependent endocytosis. This Saccharomyces cerevisiae (strain ATCC 204508 / S288c) (Baker's yeast) protein is Ubiquitin carboxyl-terminal hydrolase 10 (UBP10).